A 278-amino-acid polypeptide reads, in one-letter code: uncharacterized protein (278 aa).

Residues histidine 112–isoleucine 113, valine 191–arginine 193, and aspartate 217 contribute to the NAD(+) site. Residue arginine 193 is part of the active site. The active site involves glutamate 222. Histidine 241 acts as the Proton donor in catalysis. Position 241–244 (histidine 241–glycine 244) interacts with NAD(+).

Belongs to the D-isomer specific 2-hydroxyacid dehydrogenase family.

This is an uncharacterized protein from Streptomyces coelicolor.